Here is a 434-residue protein sequence, read N- to C-terminus: MKTRTQQIEELQKEWTQPRWEGITRPYSAEDVVKLRGSVNPECTLAQLGAAKMWRLLHGESKKGYINSLGALTGGQALQQAKAGIEAVYLSGWQVAADANLAASMYPDQSLYPANSVPAVVERINNTFRRADQIQWSAGIEPGDPRYVDYFLPIVADAEAGFGGVLNAFELMKAMIEAGAAAVHFEDQLASVKKCGHMGGKVLVPTQEAIQKLVAARLAADVTGVPTLLVARTDADAADLITSDCDPYDSEFITGERTSEGFFRTHAGIEQAISRGLAYAPYADLVWCETSTPDLELARRFAQAIHAKYPGKLLAYNCSPSFNWQKNLDDKTIASFQQQLSDMGYKFQFITLAGIHSMWFNMFDLANAYAQGEGMKHYVEKVQQPEFAAAKDGYTFVSHQQEVGTGYFDKVTTIIQGGTSSVTALTGSTEESQF.

91–93 (SGW) provides a ligand contact to substrate. Residue Asp-157 participates in Mg(2+) binding. Cys-195 serves as the catalytic Proton acceptor. Residues 196–197 (GH), Arg-232, 317–321 (NCSPS), and Thr-351 each bind substrate.

It belongs to the isocitrate lyase/PEP mutase superfamily. Isocitrate lyase family. In terms of assembly, homotetramer. Mg(2+) serves as cofactor.

It catalyses the reaction D-threo-isocitrate = glyoxylate + succinate. Its pathway is carbohydrate metabolism; glyoxylate cycle; (S)-malate from isocitrate: step 1/2. Its function is as follows. Involved in the metabolic adaptation in response to environmental changes. Catalyzes the reversible formation of succinate and glyoxylate from isocitrate, a key step of the glyoxylate cycle, which operates as an anaplerotic route for replenishing the tricarboxylic acid cycle during growth on fatty acid substrates. This Escherichia coli O6:H1 (strain CFT073 / ATCC 700928 / UPEC) protein is Isocitrate lyase (aceA).